The primary structure comprises 507 residues: MFS-type transporter acdC (507 aa).

The interval 1–50 (MSPNAPAVDIGAAPSLDTPEGDTKQPAEDHVEKDSNLVDWDGPDDPEHPQ) is disordered. Basic and acidic residues predominate over residues 21-36 (GDTKQPAEDHVEKDSN). Residue Asn51 is glycosylated (N-linked (GlcNAc...) asparagine). Residues 58 to 78 (WGITFSLASMTMWITFSSSVL) traverse the membrane as a helical segment. N-linked (GlcNAc...) asparagine glycosylation is present at Asn90. A run of 5 helical transmembrane segments spans residues 95–115 (VMPLATTLVIFGFALGPLCWA), 125–145 (LPTFLGYGVFAIFQVPVAVAP), 155–175 (FFVGVFGSSALSVGPGVMADI), 186–206 (PFFFAANLLGPILGPIIGGFI), and 215–235 (WTAWLTLITSIFFGVLALLIV). N-linked (GlcNAc...) asparagine glycosylation occurs at Asn257. Transmembrane regions (helical) follow at residues 290–310 (PILICFTVYLSLIYGILYLFL), 328–348 (IAGLPFLGILVGMVLGIGIII), 371–391 (LVEMMLTSITMPIGLFWFGWA), 395–415 (HWMVQTIAGVPLGIGLFVLFM), 442–462 (FLGGSFPLFATAMYHNLGVDW), and 466–486 (ILGFISVAMVPIPFAFYIFGA).

This sequence belongs to the major facilitator superfamily. CAR1 family.

Its subcellular location is the membrane. Functionally, MFS-type transporter; part of the gene cluster that mediates the biosynthesis of aspcandine, a pyrrolobenzazepine alkaloid. The polypeptide is MFS-type transporter acdC (Aspergillus candidus).